A 363-amino-acid chain; its full sequence is S-adenosylmethionine:tRNA ribosyltransferase-isomerase (363 aa).

Belongs to the QueA family. In terms of assembly, monomer.

Its subcellular location is the cytoplasm. The enzyme catalyses 7-aminomethyl-7-carbaguanosine(34) in tRNA + S-adenosyl-L-methionine = epoxyqueuosine(34) in tRNA + adenine + L-methionine + 2 H(+). It functions in the pathway tRNA modification; tRNA-queuosine biosynthesis. Functionally, transfers and isomerizes the ribose moiety from AdoMet to the 7-aminomethyl group of 7-deazaguanine (preQ1-tRNA) to give epoxyqueuosine (oQ-tRNA). This Magnetococcus marinus (strain ATCC BAA-1437 / JCM 17883 / MC-1) protein is S-adenosylmethionine:tRNA ribosyltransferase-isomerase.